We begin with the raw amino-acid sequence, 620 residues long: 1-deoxy-D-xylulose-5-phosphate synthase (620 aa).

Thiamine diphosphate is bound by residues histidine 80 and 121–123; that span reads GHS. Aspartate 152 is a binding site for Mg(2+). Residues 153-154, asparagine 181, tyrosine 288, and glutamate 370 each bind thiamine diphosphate; that span reads GA. Asparagine 181 is a binding site for Mg(2+).

The protein belongs to the transketolase family. DXPS subfamily. In terms of assembly, homodimer. The cofactor is Mg(2+). Thiamine diphosphate serves as cofactor.

The catalysed reaction is D-glyceraldehyde 3-phosphate + pyruvate + H(+) = 1-deoxy-D-xylulose 5-phosphate + CO2. Its pathway is metabolic intermediate biosynthesis; 1-deoxy-D-xylulose 5-phosphate biosynthesis; 1-deoxy-D-xylulose 5-phosphate from D-glyceraldehyde 3-phosphate and pyruvate: step 1/1. Catalyzes the acyloin condensation reaction between C atoms 2 and 3 of pyruvate and glyceraldehyde 3-phosphate to yield 1-deoxy-D-xylulose-5-phosphate (DXP). The polypeptide is 1-deoxy-D-xylulose-5-phosphate synthase (Shigella dysenteriae serotype 1 (strain Sd197)).